The chain runs to 420 residues: Sodium/proton antiporter 2 (420 aa).

The next 11 helical transmembrane spans lie at 25–45, 60–80, 94–114, 136–156, 173–193, 221–241, 242–262, 285–305, 321–341, 363–383, and 400–420; these read IALL…SVEI, IVFY…HQGF, ILLW…DNLT, LGAV…IGDV, IKNL…LMSL, LVFG…SLTG, LPPY…TDVI, GALF…AGIL, LIAS…LVAA, FCAG…VIFM, and FAFA…NFPL.

The protein belongs to the NhaD Na(+)/H(+) (TC 2.A.62) antiporter family.

It is found in the membrane. Functionally, na(+)/H(+) antiporter that extrudes sodium in exchange for external protons. This is Sodium/proton antiporter 2 from Arabidopsis thaliana (Mouse-ear cress).